A 130-amino-acid polypeptide reads, in one-letter code: Cuticle protein 14 isoform a (130 aa).

The Chitin-binding type R&amp;R domain maps to 24-90 (IGNYNFGYNE…NVHTNEPGTD (67 aa)).

The polypeptide is Cuticle protein 14 isoform a (Limulus polyphemus (Atlantic horseshoe crab)).